A 270-amino-acid chain; its full sequence is 3-methyl-2-oxobutanoate hydroxymethyltransferase (270 aa).

Mg(2+)-binding residues include Asp-43 and Asp-82. 3-methyl-2-oxobutanoate is bound by residues 43 to 44 (DS), Asp-82, and Lys-112. Residue Glu-114 participates in Mg(2+) binding. The active-site Proton acceptor is the Glu-179.

This sequence belongs to the PanB family. Homodecamer; pentamer of dimers. Mg(2+) is required as a cofactor.

It localises to the cytoplasm. The catalysed reaction is 3-methyl-2-oxobutanoate + (6R)-5,10-methylene-5,6,7,8-tetrahydrofolate + H2O = 2-dehydropantoate + (6S)-5,6,7,8-tetrahydrofolate. It participates in cofactor biosynthesis; (R)-pantothenate biosynthesis; (R)-pantoate from 3-methyl-2-oxobutanoate: step 1/2. Catalyzes the reversible reaction in which hydroxymethyl group from 5,10-methylenetetrahydrofolate is transferred onto alpha-ketoisovalerate to form ketopantoate. This chain is 3-methyl-2-oxobutanoate hydroxymethyltransferase, found in Oceanobacillus iheyensis (strain DSM 14371 / CIP 107618 / JCM 11309 / KCTC 3954 / HTE831).